We begin with the raw amino-acid sequence, 246 residues long: UDP-N-acetyl-D-mannosaminuronic acid transferase (246 aa).

The protein belongs to the glycosyltransferase 26 family.

It carries out the reaction UDP-N-acetyl-alpha-D-mannosaminouronate + N-acetyl-alpha-D-glucosaminyl-di-trans,octa-cis-undecaprenyl diphosphate = beta-D-ManNAcA-(1-&gt;4)-alpha-D-GlcNAc-di-trans,octa-cis-undecaprenyl diphosphate + UDP + H(+). It functions in the pathway bacterial outer membrane biogenesis; enterobacterial common antigen biosynthesis. In terms of biological role, catalyzes the synthesis of Und-PP-GlcNAc-ManNAcA (Lipid II), the second lipid-linked intermediate involved in enterobacterial common antigen (ECA) synthesis. This chain is UDP-N-acetyl-D-mannosaminuronic acid transferase, found in Escherichia fergusonii (strain ATCC 35469 / DSM 13698 / CCUG 18766 / IAM 14443 / JCM 21226 / LMG 7866 / NBRC 102419 / NCTC 12128 / CDC 0568-73).